The primary structure comprises 576 residues: Kinetochore-associated protein DSN1 (576 aa).

Over residues 1-11 (MSLEPTQTVSG) the composition is skewed to polar residues. Disordered regions lie at residues 1–22 (MSLE…RTHK), 35–64 (LESD…NKQS), 185–205 (YSQP…ISSS), and 227–246 (QPHY…SQRG). Positions 235-246 (RERKKSIGSQRG) are enriched in basic residues. Phosphoserine is present on serine 250. A disordered region spans residues 412 to 437 (RSRRKFSERRKALPKEPKKLLPNSKN). Residues 420–430 (RRKALPKEPKK) show a composition bias toward basic and acidic residues.

In terms of assembly, component of the MIND kinetochore complex, which is composed of at least MTW1, NNF1, NSL1 and DSN1. Interacts with NSL1.

It localises to the nucleus. The protein localises to the chromosome. The protein resides in the centromere. Its subcellular location is the kinetochore. In terms of biological role, acts as an essential component of the kinetochore MIND complex, which is required for the spindle checkpoint and kinetochore integrity. MIND plays a role in establishing a bipolar spindle-kinetochore interaction by joining kinetochore subunits contacting DNA to those contacting microtubules. The chain is Kinetochore-associated protein DSN1 (DSN1) from Saccharomyces cerevisiae (strain ATCC 204508 / S288c) (Baker's yeast).